The chain runs to 135 residues: 6,7-dimethyl-8-ribityllumazine synthase (135 aa).

5-amino-6-(D-ribitylamino)uracil-binding positions include phenylalanine 12, 44–46, and 68–70; these read AYD and CVI. Residue 73 to 74 coordinates (2S)-2-hydroxy-3-oxobutyl phosphate; the sequence is AT. The active-site Proton donor is histidine 76. Leucine 101 lines the 5-amino-6-(D-ribitylamino)uracil pocket. Residue arginine 116 participates in (2S)-2-hydroxy-3-oxobutyl phosphate binding.

It belongs to the DMRL synthase family.

It carries out the reaction (2S)-2-hydroxy-3-oxobutyl phosphate + 5-amino-6-(D-ribitylamino)uracil = 6,7-dimethyl-8-(1-D-ribityl)lumazine + phosphate + 2 H2O + H(+). The protein operates within cofactor biosynthesis; riboflavin biosynthesis; riboflavin from 2-hydroxy-3-oxobutyl phosphate and 5-amino-6-(D-ribitylamino)uracil: step 1/2. Catalyzes the formation of 6,7-dimethyl-8-ribityllumazine by condensation of 5-amino-6-(D-ribitylamino)uracil with 3,4-dihydroxy-2-butanone 4-phosphate. This is the penultimate step in the biosynthesis of riboflavin. The chain is 6,7-dimethyl-8-ribityllumazine synthase from Methanoculleus marisnigri (strain ATCC 35101 / DSM 1498 / JR1).